The sequence spans 272 residues: Putative imidazole glycerol phosphate synthase subunit hisF2 (272 aa).

D133 is a catalytic residue.

Belongs to the HisA/HisF family. As to quaternary structure, heterodimer of HisH and HisF.

It localises to the cytoplasm. The catalysed reaction is 5-[(5-phospho-1-deoxy-D-ribulos-1-ylimino)methylamino]-1-(5-phospho-beta-D-ribosyl)imidazole-4-carboxamide + L-glutamine = D-erythro-1-(imidazol-4-yl)glycerol 3-phosphate + 5-amino-1-(5-phospho-beta-D-ribosyl)imidazole-4-carboxamide + L-glutamate + H(+). It participates in amino-acid biosynthesis; L-histidine biosynthesis; L-histidine from 5-phospho-alpha-D-ribose 1-diphosphate: step 5/9. IGPS catalyzes the conversion of PRFAR and glutamine to IGP, AICAR and glutamate. The HisF subunit catalyzes the cyclization activity that produces IGP and AICAR from PRFAR using the ammonia provided by the HisH subunit. The protein is Putative imidazole glycerol phosphate synthase subunit hisF2 (hisF2) of Vibrio vulnificus (strain YJ016).